A 393-amino-acid polypeptide reads, in one-letter code: Probable galacturonosyltransferase-like 8 (393 aa).

Over 1–4 the chain is Cytoplasmic; it reads MSSR. The helical; Signal-anchor for type II membrane protein transmembrane segment at 5-25 threads the bilayer; sequence FSLTVVCLIALLPFVVGIRLI. Topologically, residues 26-393 are lumenal; sequence PARITSVGDG…SELTDDSSFL (368 aa). The N-linked (GlcNAc...) asparagine glycan is linked to asparagine 226.

This sequence belongs to the glycosyltransferase 8 family.

It is found in the golgi apparatus membrane. The protein operates within glycan metabolism; pectin biosynthesis. Its function is as follows. May be involved in pectin and/or xylans biosynthesis in cell walls. This is Probable galacturonosyltransferase-like 8 (GATL8) from Arabidopsis thaliana (Mouse-ear cress).